A 147-amino-acid polypeptide reads, in one-letter code: Large ribosomal subunit protein bL9 (147 aa).

The disordered stretch occupies residues T40 to Q60. Residues K45–K59 show a composition bias toward basic and acidic residues.

The protein belongs to the bacterial ribosomal protein bL9 family.

Binds to the 23S rRNA. This is Large ribosomal subunit protein bL9 from Exiguobacterium sibiricum (strain DSM 17290 / CCUG 55495 / CIP 109462 / JCM 13490 / 255-15).